We begin with the raw amino-acid sequence, 171 residues long: Iron-sulfur cluster assembly protein 1 (171 aa).

The transit peptide at 1–55 (MLRAGGRRLLAPGLRRVLGGGAAAPVAVGGAKAYHERVVDHYENPRNVGSFENDD) directs the protein to the mitochondrion.

The protein belongs to the NifU family. Component of the core Fe-S cluster (ISC) assembly machinery. The cofactor is [2Fe-2S] cluster.

It is found in the mitochondrion matrix. The protein operates within cofactor biosynthesis; iron-sulfur cluster biosynthesis. Its function is as follows. Scaffold protein for the de novo synthesis of iron-sulfur (Fe-S) clusters within mitochondria, which is required for maturation of both mitochondrial and cytoplasmic [2Fe-2S] and [4Fe-4S] proteins. First, a [2Fe-2S] cluster is transiently assembled on the scaffold protein ISCU (ISU1, ISU2 or ISU3). In a second step, the cluster is released from ISCU, transferred to a glutaredoxin, followed by the formation of mitochondrial [2Fe-2S] proteins, the synthesis of [4Fe-4S] clusters and their target-specific insertion into the recipient apoproteins. Cluster assembly on ISCU depends on the function of the cysteine desulfurase complex NFS1-ISD11, which serves as the sulfur donor for cluster synthesis, the iron-binding protein frataxin as the putative iron donor, and the electron transfer chain comprised of ferredoxin reductase and ferredoxin, which receive their electrons from NADH. This is Iron-sulfur cluster assembly protein 1 from Oryza sativa subsp. japonica (Rice).